Reading from the N-terminus, the 286-residue chain is uncharacterized protein (286 aa).

A signal peptide spans 1 to 19; it reads MISKEYISLLSALLTKGYS.

This is an uncharacterized protein from Acidianus filamentous virus 2 (isolate Italy/Pozzuoli) (AFV-2).